Consider the following 192-residue polypeptide: Ion-translocating oxidoreductase complex subunit A (192 aa).

6 helical membrane-spanning segments follow: residues 5 to 25 (LLLL…FLGL), 39 to 59 (IGMS…SYLV), 65 to 85 (LPFD…AVVV), 102 to 122 (ALGI…VALL), 134 to 154 (AIYG…FSAM), and 171 to 191 (AIAM…TGLV).

The protein belongs to the NqrDE/RnfAE family. In terms of assembly, the complex is composed of six subunits: RnfA, RnfB, RnfC, RnfD, RnfE and RnfG.

It is found in the cell inner membrane. Its function is as follows. Part of a membrane-bound complex that couples electron transfer with translocation of ions across the membrane. This Shewanella oneidensis (strain ATCC 700550 / JCM 31522 / CIP 106686 / LMG 19005 / NCIMB 14063 / MR-1) protein is Ion-translocating oxidoreductase complex subunit A.